We begin with the raw amino-acid sequence, 857 residues long: Autoinducer 2 sensor kinase/phosphatase LuxQ (857 aa).

The next 2 membrane-spanning stretches (helical) occupy residues 20 to 40 (IIFL…YYFS) and 283 to 303 (LGLA…RSWI). A Histidine kinase domain is found at 490-712 (KMSHEIRTPL…TFYLSIPVEK (223 aa)). His-493 bears the Phosphohistidine; by autocatalysis mark. Residues 735-850 (KVLLVEDNHT…ELHDELLHFK (116 aa)) form the Response regulatory domain. Asp-784 is modified (4-aspartylphosphate).

As to quaternary structure, binds the complex formed by the autoinducer and LuxP.

It localises to the cell inner membrane. It carries out the reaction ATP + protein L-histidine = ADP + protein N-phospho-L-histidine.. In terms of biological role, at low cell density, in absence of autoinducer has a kinase activity, and autophosphorylates on a histidine residue. The phosphoryl group is then transferred to an aspartate residue in the response regulator domain. The phosphoryl group is transferred to LuxU, and ultimately to LuxO. At high cell density, in the presence of autoinducer, the kinase activity is inactivated, and the response regulator domain has a phosphatase activity. This is Autoinducer 2 sensor kinase/phosphatase LuxQ (luxQ) from Vibrio vulnificus (strain YJ016).